Consider the following 292-residue polypeptide: 4-amino-L-phenylalanine/4-methylamino-L-phenylalanine methyltransferase (292 aa).

128–132 (CAGPG) lines the S-adenosyl-L-methionine pocket.

It belongs to the protein N5-glutamine methyltransferase family.

The catalysed reaction is 4-amino-L-phenylalanine + S-adenosyl-L-methionine = 4-methylamino-L-phenylalanine + S-adenosyl-L-homocysteine + H(+). The enzyme catalyses 4-methylamino-L-phenylalanine + S-adenosyl-L-methionine = 4-dimethylamino-L-phenylalanine + S-adenosyl-L-homocysteine + H(+). Its pathway is antibiotic biosynthesis. In terms of biological role, involved in pristinamycin I biosynthesis. Catalyzes the SAM-dependent methylation of 4-amino-L-phenylalanine (PAPA) to 4-methylamino-L-phenylalanine (MMPAPA), and of MMPAPA to 4-dimethylamino-L-phenylalanine (DMPAPA). This Streptomyces pristinaespiralis protein is 4-amino-L-phenylalanine/4-methylamino-L-phenylalanine methyltransferase.